Reading from the N-terminus, the 62-residue chain is Large ribosomal subunit protein bL33 (62 aa).

The protein belongs to the bacterial ribosomal protein bL33 family.

The chain is Large ribosomal subunit protein bL33 from Phocaeicola vulgatus (strain ATCC 8482 / DSM 1447 / JCM 5826 / CCUG 4940 / NBRC 14291 / NCTC 11154) (Bacteroides vulgatus).